The following is a 201-amino-acid chain: Riboflavin synthase (201 aa).

Lumazine-binding repeat units lie at residues 1-97 and 98-197; these read MFTG…LGGH and IVQG…ERLM. Residues 4-6, 47-49, 62-67, 101-103, Lys-136, 145-147, and 162-167 each bind 2,4-dihydroxypteridine; these read GIV, CLT, DVMAET, GHV, SLT, and SLIPTT.

Homotrimer.

The catalysed reaction is 2 6,7-dimethyl-8-(1-D-ribityl)lumazine + H(+) = 5-amino-6-(D-ribitylamino)uracil + riboflavin. It participates in cofactor biosynthesis; riboflavin biosynthesis; riboflavin from 2-hydroxy-3-oxobutyl phosphate and 5-amino-6-(D-ribitylamino)uracil: step 2/2. Functionally, catalyzes the dismutation of two molecules of 6,7-dimethyl-8-ribityllumazine, resulting in the formation of riboflavin and 5-amino-6-(D-ribitylamino)uracil. The polypeptide is Riboflavin synthase (ribE) (Mycobacterium bovis (strain ATCC BAA-935 / AF2122/97)).